A 228-amino-acid polypeptide reads, in one-letter code: Leucyl/phenylalanyl-tRNA--protein transferase (228 aa).

This sequence belongs to the L/F-transferase family.

It localises to the cytoplasm. It catalyses the reaction N-terminal L-lysyl-[protein] + L-leucyl-tRNA(Leu) = N-terminal L-leucyl-L-lysyl-[protein] + tRNA(Leu) + H(+). It carries out the reaction N-terminal L-arginyl-[protein] + L-leucyl-tRNA(Leu) = N-terminal L-leucyl-L-arginyl-[protein] + tRNA(Leu) + H(+). The catalysed reaction is L-phenylalanyl-tRNA(Phe) + an N-terminal L-alpha-aminoacyl-[protein] = an N-terminal L-phenylalanyl-L-alpha-aminoacyl-[protein] + tRNA(Phe). In terms of biological role, functions in the N-end rule pathway of protein degradation where it conjugates Leu, Phe and, less efficiently, Met from aminoacyl-tRNAs to the N-termini of proteins containing an N-terminal arginine or lysine. The sequence is that of Leucyl/phenylalanyl-tRNA--protein transferase from Thiobacillus denitrificans (strain ATCC 25259 / T1).